The sequence spans 219 residues: MRIILLGAPGAGKGTQAHYISKALDIPQISTGDMLRAAVKAETPVGLEAKKVMDAGQLVSDDIILALVKERLKNADCSNGCLFDGFPRTLAQAEALKKDGVGIDHVVEIDVADSEIITRMSGRRVHLSSGRTYHVLFNPPKQEGLDDETGEPLVQRADDEEDTVRKRLEIYHNQTAPLIEYYSGWASESIENAPRYRKIKGTGSVEEIRDRILGVLTSC.

10 to 15 (GAGKGT) is an ATP binding site. The tract at residues 30 to 59 (STGDMLRAAVKAETPVGLEAKKVMDAGQLV) is NMP. AMP is bound by residues Thr31, Arg36, 57-59 (QLV), 85-88 (GFPR), and Gln92. Residues 122–159 (GRRVHLSSGRTYHVLFNPPKQEGLDDETGEPLVQRADD) form an LID region. ATP contacts are provided by residues Arg123 and 132–133 (TY). Arg156 and Arg167 together coordinate AMP. Residue Gly203 coordinates ATP.

It belongs to the adenylate kinase family. As to quaternary structure, monomer.

The protein localises to the cytoplasm. The catalysed reaction is AMP + ATP = 2 ADP. Its pathway is purine metabolism; AMP biosynthesis via salvage pathway; AMP from ADP: step 1/1. In terms of biological role, catalyzes the reversible transfer of the terminal phosphate group between ATP and AMP. Plays an important role in cellular energy homeostasis and in adenine nucleotide metabolism. The chain is Adenylate kinase from Chlorobium limicola (strain DSM 245 / NBRC 103803 / 6330).